We begin with the raw amino-acid sequence, 409 residues long: Diels-Alderase ucsH (409 aa).

The chain crosses the membrane as a helical span at residues 386–406 (IYFFICMLLAVVTFGYINILE).

This sequence belongs to the Diels-Alderase family.

The protein localises to the membrane. The protein operates within mycotoxin biosynthesis. Its function is as follows. Diels-Alderase; part of the gene cluster that mediates the biosynthesis of UCS1025A, a member of the pyrrolizidinone family that acts as a strong telomerase inhibitor and displays potent antibacterial and antitumor properties. These compounds share a hemiaminal-containing pyrrolizidinone core fused with a gamma-lactone, giving a furopyrrolizidine that is connected to a decalin fragment. The polyketide synthase module (PKS) of the PKS-NRPS ucsA is responsible for the synthesis of the polyketide backbone via the condensation of an acetyl-CoA starter unit with 6 malonyl-CoA units. The downstream nonribosomal peptide synthetase (NRPS) module then amidates the carboxyl end of the polyketide with a 2S,3S-methylproline derived from L-isoleucine by the 2-oxoglutarate-dependent dioxygenase ucsF which converts L-isoleucine to (4S,5S)-4-methylpyrroline-5-carboxylate that is further converted to 2S,3S-methylproline by the pyrroline-5-carboxylate reductase ucsG. Reductive release of the completed aminoacyl polyketide from the assembly line can form the 3-pyrrolin-2-one structure via an intramolecular Knoevenagel reaction. Because ucsA lacks a designated enoylreductase (ER) domain, the required activity is provided the enoyl reductase ucsL. This keto acyclic precursor is the substrate of the Diels-Alderase ucsH, that catalyzes the Diels-Alder cycloaddition. Oxidation of the 3S-methyl group to a carboxylate by the cytochrome P450 monooxygenase ucsK allows an oxa-Michael cyclization that might involve the reductase/dehydrogenase ucsI and which furnishes the furopyrrolizidine. The oxidase ucsJ likely plays a critical role in stereoselective reduction of the C5-C6 double bond to afford the required R-configured carboxylate group. Further enolization and oxidation at C5 by an unidentified enzyme affords the last intermediate that can undergo oxa-Michael cyclization to yield UCS1025A. This is Diels-Alderase ucsH from Acremonium sp.